The following is a 159-amino-acid chain: ATP synthase subunit b (159 aa).

The helical transmembrane segment at 4–24 (VGINGTLIVQLVTFVILVALL) threads the bilayer.

Belongs to the ATPase B chain family. F-type ATPases have 2 components, F(1) - the catalytic core - and F(0) - the membrane proton channel. F(1) has five subunits: alpha(3), beta(3), gamma(1), delta(1), epsilon(1). F(0) has three main subunits: a(1), b(2) and c(10-14). The alpha and beta chains form an alternating ring which encloses part of the gamma chain. F(1) is attached to F(0) by a central stalk formed by the gamma and epsilon chains, while a peripheral stalk is formed by the delta and b chains.

Its subcellular location is the cell inner membrane. In terms of biological role, f(1)F(0) ATP synthase produces ATP from ADP in the presence of a proton or sodium gradient. F-type ATPases consist of two structural domains, F(1) containing the extramembraneous catalytic core and F(0) containing the membrane proton channel, linked together by a central stalk and a peripheral stalk. During catalysis, ATP synthesis in the catalytic domain of F(1) is coupled via a rotary mechanism of the central stalk subunits to proton translocation. Component of the F(0) channel, it forms part of the peripheral stalk, linking F(1) to F(0). In Acidithiobacillus ferrooxidans (strain ATCC 23270 / DSM 14882 / CIP 104768 / NCIMB 8455) (Ferrobacillus ferrooxidans (strain ATCC 23270)), this protein is ATP synthase subunit b.